The sequence spans 300 residues: Bifunctional protein FolD 2 (300 aa).

NADP(+)-binding positions include 166 to 168, serine 191, and isoleucine 232; that span reads GRS.

This sequence belongs to the tetrahydrofolate dehydrogenase/cyclohydrolase family. As to quaternary structure, homodimer.

It carries out the reaction (6R)-5,10-methylene-5,6,7,8-tetrahydrofolate + NADP(+) = (6R)-5,10-methenyltetrahydrofolate + NADPH. It catalyses the reaction (6R)-5,10-methenyltetrahydrofolate + H2O = (6R)-10-formyltetrahydrofolate + H(+). It functions in the pathway one-carbon metabolism; tetrahydrofolate interconversion. Catalyzes the oxidation of 5,10-methylenetetrahydrofolate to 5,10-methenyltetrahydrofolate and then the hydrolysis of 5,10-methenyltetrahydrofolate to 10-formyltetrahydrofolate. The polypeptide is Bifunctional protein FolD 2 (Roseobacter denitrificans (strain ATCC 33942 / OCh 114) (Erythrobacter sp. (strain OCh 114))).